A 453-amino-acid chain; its full sequence is MITLKQALSLSQDELETLKNEIDAKVRASDLNAYIKAPSLNGASAKGVPILIKDNISVKGWEITCSSKILEGYVAPYHASVMENLHQNSMAGFGLSNMDEFAMGSTTESSCYGITKNPRDKNRVPGGSSGGSAAAVAGGLAVAALGSDTGGSIRQPASYCGCVGLKPTYGRVSRYGLIAYCSSFDQIGPITQNVEDASILFDAISGYDSKDSTSANLKPTQTFKNLNRDKRFKIAVLMDHIKDASNEVQLAYENTLKALKEMGHEIVEKKMLDSHYQISIYYIISMAEASSNLARFDGVRYGRRAQNIKDLKELYLKSRSEGFGDEVKRRIMLGNFVLSSGYYDAYYLKAQQMRLIIKEQYNKIFEEVDLIFTPVAPTSAHLFNYHASPLEMYLSDIYTIGANLSGLPALSLPVAKDPLGLPIGMQFIAKAFDEQSLLDVSYALEQELDLKLD.

Active-site charge relay system residues include K53 and S128. Catalysis depends on S152, which acts as the Acyl-ester intermediate.

Belongs to the amidase family. GatA subfamily. In terms of assembly, heterotrimer of A, B and C subunits.

It catalyses the reaction L-glutamyl-tRNA(Gln) + L-glutamine + ATP + H2O = L-glutaminyl-tRNA(Gln) + L-glutamate + ADP + phosphate + H(+). Functionally, allows the formation of correctly charged Gln-tRNA(Gln) through the transamidation of misacylated Glu-tRNA(Gln) in organisms which lack glutaminyl-tRNA synthetase. The reaction takes place in the presence of glutamine and ATP through an activated gamma-phospho-Glu-tRNA(Gln). This Helicobacter pylori (strain ATCC 700392 / 26695) (Campylobacter pylori) protein is Glutamyl-tRNA(Gln) amidotransferase subunit A (gatA).